Here is a 482-residue protein sequence, read N- to C-terminus: MPMDVRGCLFPSVQMLLCWLVSLLLATVGGKEVCYGHLGCFSNDKPWAGMIQRPSKIFPWSPEDIDTRFLLYTNENPNNYQIISATDPATINASNFQLDRKTRFIIHGFIDKGEEGWLLDMCKKMFQVEKVNCICVDWKRGSRTEYTQASYNTRVVGAEIAFLVQVLSTEMGYSPENVHLIGHSLGSHVAGEAGRRLEGHVGRITGLDPAEPCFQGLPEEVRLDPSDAMFVDVIHTDSAPIIPYLGFGMSQKVGHLDFFPNGGKEMPGCQKNILSTIVDINGIWEGTRNFAACNHLRSYKYYASSILNPDGFLGYPCSSYEKFQHNDCFPCPEQGCPKMGHYADQFEGKTATVEQTFFLNTGDSGNFTRWRYKVSVTLSGAKKLSGYILVALYGCNGNSKQYEVFKGSLQPEARYIRDIDVDVNVGEIQKVKFLWNNKVINLFRPTMGASQITVQRGKDGKEFNFCSSNTVHEDVLQSLYPC.

An N-terminal signal peptide occupies residues 1 to 30 (MPMDVRGCLFPSVQMLLCWLVSLLLATVGG). An intrachain disulfide couples Cys-34 to Cys-40. N-linked (GlcNAc...) asparagine glycosylation is present at Asn-92. The interval 106-118 (IHGFIDKGEEGWL) is required for galactolipase activity. A disulfide bridge links Cys-122 with Cys-133. Ser-184 serves as the catalytic Nucleophile. Asp-208 functions as the Charge relay system in the catalytic mechanism. Ca(2+) is bound by residues Glu-219, Arg-222, Asp-224, and Asp-227. An intrachain disulfide couples Cys-269 to Cys-293. Residues 270-292 (QKNILSTIVDINGIWEGTRNFAA) form a required for galactolipase activity region. His-295 (charge relay system) is an active-site residue. Cystine bridges form between Cys-317/Cys-328 and Cys-331/Cys-336. N-linked (GlcNAc...) asparagine glycans are attached at residues Asn-366 and Asn-441. The region spanning 370-482 (WRYKVSVTLS…EDVLQSLYPC (113 aa)) is the PLAT domain. A disulfide bridge links Cys-466 with Cys-482.

The protein belongs to the AB hydrolase superfamily. Lipase family. As to expression, expressed in acinar cells of pancreas (at protein level).

It localises to the secreted. It is found in the zymogen granule membrane. Its subcellular location is the cell projection. The protein localises to the neuron projection. The enzyme catalyses a triacylglycerol + H2O = a diacylglycerol + a fatty acid + H(+). It carries out the reaction a 1,2-diacyl-3-O-(beta-D-galactosyl)-sn-glycerol + 2 H2O = 3-beta-D-galactosyl-sn-glycerol + 2 a fatty acid + 2 H(+). The catalysed reaction is 1,2,3-tri-(9Z-octadecenoyl)-glycerol + H2O = di-(9Z)-octadecenoylglycerol + (9Z)-octadecenoate + H(+). It catalyses the reaction di-(9Z)-octadecenoylglycerol + H2O = (9Z-octadecenoyl)-glycerol + (9Z)-octadecenoate + H(+). The enzyme catalyses (9Z-octadecenoyl)-glycerol + H2O = glycerol + (9Z)-octadecenoate + H(+). It carries out the reaction 1-(9Z-octadecenoyl)-glycerol + H2O = glycerol + (9Z)-octadecenoate + H(+). The catalysed reaction is 1,2,3-tripropanoylglycerol + H2O = dipropanoylglycerol + propanoate + H(+). It catalyses the reaction 1,2,3-tributanoylglycerol + H2O = dibutanoylglycerol + butanoate + H(+). The enzyme catalyses 1,2,3-trioctanoylglycerol + H2O = dioctanoylglycerol + octanoate + H(+). It carries out the reaction 1,2-didecanoylglycerol + H2O = decanoylglycerol + decanoate + H(+). The catalysed reaction is long chain 1,2-diacyl-3-O-beta-D-galactosyl-sn-glycerol + H2O = long chain acyl-3-O-beta-D-galactosyl-sn-glycerol + a fatty acid + H(+). It catalyses the reaction 1,2-dioctanoyl-3-O-beta-D-galactosyl-sn-glycerol + H2O = octanoyl-3-(beta-D-galactosyl)-sn-glycerol + octanoate + H(+). The enzyme catalyses 1,2-didodecanoyl-3-beta-D-galactosyl-sn-glycerol + H2O = dodecanoyl-3-beta-D-galactosyl-sn-glycerol + dodecanoate + H(+). It carries out the reaction 1-beta-D-galactosyl-2,3-didodecanoyl-sn-glycerol + H2O = 1-beta-D-galactosyl-dodecanoyl-sn-glycerol + dodecanoate + H(+). The catalysed reaction is a 1,2-diacyl-3-O-[alpha-D-galactosyl-(1-&gt;6)-beta-D-galactosyl]-sn-glycerol + H2O = acyl-3-O-[alpha-D-galactosyl-(1-&gt;6)-beta-D-galactosyl]-sn-glycerol + a fatty acid + H(+). It catalyses the reaction long chain 1,2-diacyl-3-O-[alpha-D-galactosyl-(1-&gt;6)-beta-D-galactosyl]-sn-glycerol + H2O = long chain acyl-3-O-[alpha-D-galactosyl-(1-&gt;6)-beta-D-galactosyl]-sn-glycerol + a fatty acid + H(+). The enzyme catalyses 1,2-dioctanoyl-3-O-[alpha-D-galactosyl-(1-&gt;6)-beta-D-galactosyl]-sn-glycerol + H2O = octanoyl-3-O-[alpha-D-galactosyl-(1-&gt;6)-beta-D-galactosyl]-sn-glycerol + octanoate + H(+). It carries out the reaction 1,2-didodecanoyl-3-O-[alpha-D-galactosyl-(1-&gt;6)-beta-D-galactosyl]-sn-glycerol + H2O = dodecanoyl-3-O-[alpha-D-galactosyl-(1-&gt;6)-beta-D-galactosyl]-sn-glycerol + dodecanoate + H(+). The catalysed reaction is a 1,2-diacyl-sn-glycero-3-phosphocholine + H2O = a monoacyl-sn-glycero-3-phosphocholine + a fatty acid + H(+). Its pathway is glycerolipid metabolism; triacylglycerol degradation. The protein operates within glycolipid metabolism. Its activity is regulated as follows. CLPS stimulates triacylglycerol lipase activity. Triacylglycerol lipase activity is not inhibited by increasing bile salt concentration. Functionally, lipase that primarily hydrolyzes triglycerides and galactosylglycerides. In neonates, may play a major role in pancreatic digestion of dietary fats such as milk fat globules enriched in long-chain triglycerides. Hydrolyzes short-, medium- and long-chain fatty acyls in triglycerides without apparent positional specificity. Can completely deacylate triacylglycerols. When the liver matures and bile salt synthesis increases, likely functions mainly as a galactolipase and monoacylglycerol lipase. Hydrolyzes monogalactosyldiglycerols (MGDG) and digalactosyldiacylglycerols (DGDG) present in a plant-based diet, releasing long-chain polyunsaturated fatty acids. Hydrolyzes medium- and long-chain fatty acyls in galactolipids. May act together with LIPF to hydrolyze partially digested triglycerides. Hydrolyzes long-chain monoglycerides with high efficiency. In cytotoxic T cells, contributes to perforin-dependent cell lysis, but is unlikely to mediate direct cytotoxicity. Also has low phospholipase activity. In neurons, required for the localization of the phospholipid 1-oleoyl-2-palmitoyl-PC (OPPC) to neurite tips through acyl chain remodeling of membrane phospholipids. The resulting OPPC-rich lipid membrane domain recruits the t-SNARE protein STX4 by selectively interacting with the STX4 transmembrane domain and this promotes surface expression of the dopamine transporter SLC6A3/DAT at neurite tips by facilitating fusion of SLC6A3-containing transport vesicles with the plasma membrane. This Mus musculus (Mouse) protein is Pancreatic lipase-related protein 2.